Reading from the N-terminus, the 1433-residue chain is Probable serine/threonine-protein kinase DDB_G0277989 (1433 aa).

ATP contacts are provided by residues 1–4 and Lys-41; that span reads MNEI. The Protein kinase 1 domain occupies 1–272; that stretch reads MNEIIVGEYK…EFDDFTHPLS (272 aa). Asp-151 (proton acceptor) is an active-site residue. 2 stretches are compositionally biased toward low complexity: residues 332–362 and 533–550; these read NNNNNNNNNNNNNNNNNNNNNNNNNNNNNNN and TATTTPTPTATTPTTTTA. Disordered regions lie at residues 332 to 366 and 521 to 550; these read NNNNNNNNNNNNNNNNNNNNNNNNNNNNNNNSDGP and PSSETTPRPPTPTATTTPTPTATTPTTTTA. A Protein kinase 2 domain is found at 1177-1433; sequence IYDKRYYIQK…QPHVCKSFKK (257 aa).

The protein belongs to the protein kinase superfamily. Ser/Thr protein kinase family.

The enzyme catalyses L-seryl-[protein] + ATP = O-phospho-L-seryl-[protein] + ADP + H(+). The catalysed reaction is L-threonyl-[protein] + ATP = O-phospho-L-threonyl-[protein] + ADP + H(+). This chain is Probable serine/threonine-protein kinase DDB_G0277989, found in Dictyostelium discoideum (Social amoeba).